Here is a 430-residue protein sequence, read N- to C-terminus: Adenylosuccinate synthetase (430 aa).

GTP is bound by residues 12 to 18 and 40 to 42; these read GDEGKGK and GHT. The active-site Proton acceptor is the aspartate 13. Positions 13 and 40 each coordinate Mg(2+). IMP contacts are provided by residues 13–16, 38–41, threonine 130, arginine 144, glutamine 224, threonine 239, and arginine 303; these read DEGK and NAGH. The active-site Proton donor is the histidine 41. 299-305 is a substrate binding site; the sequence is TVTGRKR. GTP is bound by residues arginine 305, 331 to 333, and 413 to 415; these read KLD and STS.

The protein belongs to the adenylosuccinate synthetase family. In terms of assembly, homodimer. Requires Mg(2+) as cofactor.

The protein resides in the cytoplasm. The catalysed reaction is IMP + L-aspartate + GTP = N(6)-(1,2-dicarboxyethyl)-AMP + GDP + phosphate + 2 H(+). The protein operates within purine metabolism; AMP biosynthesis via de novo pathway; AMP from IMP: step 1/2. Functionally, plays an important role in the de novo pathway of purine nucleotide biosynthesis. Catalyzes the first committed step in the biosynthesis of AMP from IMP. The chain is Adenylosuccinate synthetase from Cereibacter sphaeroides (strain ATCC 17023 / DSM 158 / JCM 6121 / CCUG 31486 / LMG 2827 / NBRC 12203 / NCIMB 8253 / ATH 2.4.1.) (Rhodobacter sphaeroides).